The primary structure comprises 142 residues: MKVFVAICVLIGLASADYVVKNRHDMLAYRDECVKELAVPVDLVEKYQKWEYPNDAKTQCYIKCVFTKWGLFDVQSGFNVENIHQQLVGNHADHNEAFHASLAACVDKNEQGSNACEWAYRGATCLLKENLAQIQKSLAPKA.

An N-terminal signal peptide occupies residues 1–16 (MKVFVAICVLIGLASA). Intrachain disulfides connect C33–C64, C60–C116, and C105–C125.

It belongs to the PBP/GOBP family. As to expression, expressed in larval chemosensory organ. Specifically expressed exclusively in a subset of chemosensory sensilla on the third antennal segment.

Its subcellular location is the secreted. Functionally, present in the aqueous fluid surrounding olfactory sensory dendrites and are thought to aid in the capture and transport of hydrophobic odorants into and through this fluid. In Drosophila melanogaster (Fruit fly), this protein is General odorant-binding protein 99a (Obp99a).